We begin with the raw amino-acid sequence, 121 residues long: Large ribosomal subunit protein uL18 (121 aa).

Belongs to the universal ribosomal protein uL18 family. In terms of assembly, part of the 50S ribosomal subunit; part of the 5S rRNA/L5/L18/L25 subcomplex. Contacts the 5S and 23S rRNAs.

Its function is as follows. This is one of the proteins that bind and probably mediate the attachment of the 5S RNA into the large ribosomal subunit, where it forms part of the central protuberance. This is Large ribosomal subunit protein uL18 from Thermoanaerobacter pseudethanolicus (strain ATCC 33223 / 39E) (Clostridium thermohydrosulfuricum).